We begin with the raw amino-acid sequence, 352 residues long: Protein RecA (352 aa).

An ATP-binding site is contributed by G65–T72. A disordered region spans residues E332–K352. Basic and acidic residues predominate over residues E333–K352.

Belongs to the RecA family.

The protein resides in the cytoplasm. Can catalyze the hydrolysis of ATP in the presence of single-stranded DNA, the ATP-dependent uptake of single-stranded DNA by duplex DNA, and the ATP-dependent hybridization of homologous single-stranded DNAs. It interacts with LexA causing its activation and leading to its autocatalytic cleavage. The protein is Protein RecA of Photobacterium profundum (strain SS9).